The chain runs to 858 residues: Heat shock protein 105 kDa (858 aa).

An N-acetylserine modification is found at Ser-2. At Lys-471 the chain carries N6-acetyllysine. 2 disordered regions span residues 500-585 and 801-858; these read KVPT…PPEA and VNQP…MDLD. The segment covering 504-515 has biased composition (acidic residues); that stretch reads EEDDGSSVEADM. Residues Ser-509 and Ser-510 each carry the phosphoserine modification. Polar residues predominate over residues 533–549; the sequence is QQDNSEAGTQPQVQTDG. Phosphoserine is present on Ser-558. Basic and acidic residues-rich tracts occupy residues 564 to 585 and 806 to 815; these read EENKIPDADKANEKKVDQPPEA and PKIESPKLER. Ser-810 carries the post-translational modification Phosphoserine. Thr-816 carries the post-translational modification Phosphothreonine. Over residues 822-834 the composition is skewed to basic and acidic residues; sequence LDKKEDLEGKDNF.

Belongs to the heat shock protein 70 family. As to quaternary structure, interacts with HSPA8/HSC70. Interacts with HSPA1A (via NBD) and HSPA1B (via NBD). In terms of processing, phosphorylation on Ser-509 may be important for regulation of the HSPA8/HSC70 chaperone activity. Predominantly expressed in the brain and also found in the liver.

Its subcellular location is the cytoplasm. In terms of biological role, acts as a nucleotide-exchange factor (NEF) for chaperone proteins HSPA1A and HSPA1B, promoting the release of ADP from HSPA1A/B thereby triggering substrate release. Prevents the aggregation of denatured proteins in cells under severe stress, on which the ATP levels decrease markedly. Inhibits HSPA8/HSC70 ATPase and chaperone activities. This Cricetulus griseus (Chinese hamster) protein is Heat shock protein 105 kDa (HSPH1).